The sequence spans 222 residues: Germin-like protein subfamily 1 member 4 (222 aa).

An N-terminal signal peptide occupies residues 1–24 (MEGLLQFLLAKIILLALASSFVYC). C34 and C50 form a disulfide bridge. An N-linked (GlcNAc...) asparagine glycan is attached at N38. The region spanning 64 to 215 (SGLNVPGNTI…AFALDYNKVK (152 aa)) is the Cupin type-1 domain. Residues H112 and H114 each contribute to the Mn(2+) site. N-linked (GlcNAc...) asparagine glycosylation is present at N139. Residue H161 coordinates Mn(2+).

Belongs to the germin family. Oligomer (believed to be a pentamer but probably hexamer).

It localises to the secreted. It is found in the extracellular space. The protein resides in the apoplast. In terms of biological role, may play a role in plant defense. Probably has no oxalate oxidase activity even if the active site is conserved. The chain is Germin-like protein subfamily 1 member 4 from Arabidopsis thaliana (Mouse-ear cress).